The chain runs to 37 residues: Cytochrome b6-f complex subunit 5 (37 aa).

Residues Leu5 to Ala25 traverse the membrane as a helical segment.

The protein belongs to the PetG family. As to quaternary structure, the 4 large subunits of the cytochrome b6-f complex are cytochrome b6, subunit IV (17 kDa polypeptide, PetD), cytochrome f and the Rieske protein, while the 4 small subunits are PetG, PetL, PetM and PetN. The complex functions as a dimer.

It is found in the plastid. The protein resides in the chloroplast thylakoid membrane. Functionally, component of the cytochrome b6-f complex, which mediates electron transfer between photosystem II (PSII) and photosystem I (PSI), cyclic electron flow around PSI, and state transitions. PetG is required for either the stability or assembly of the cytochrome b6-f complex. The sequence is that of Cytochrome b6-f complex subunit 5 from Pyropia yezoensis (Susabi-nori).